The primary structure comprises 471 residues: Glutamate--tRNA ligase 1 (471 aa).

Residues 15 to 25 carry the 'HIGH' region motif; that stretch reads PSPTGYLHIGG. The 'KMSKS' region signature appears at 243–247; that stretch reads KLSKR. Lysine 246 contributes to the ATP binding site.

It belongs to the class-I aminoacyl-tRNA synthetase family. Glutamate--tRNA ligase type 1 subfamily. As to quaternary structure, monomer.

The protein resides in the cytoplasm. It carries out the reaction tRNA(Glu) + L-glutamate + ATP = L-glutamyl-tRNA(Glu) + AMP + diphosphate. In terms of biological role, catalyzes the attachment of glutamate to tRNA(Glu) in a two-step reaction: glutamate is first activated by ATP to form Glu-AMP and then transferred to the acceptor end of tRNA(Glu). The polypeptide is Glutamate--tRNA ligase 1 (Dinoroseobacter shibae (strain DSM 16493 / NCIMB 14021 / DFL 12)).